An 878-amino-acid polypeptide reads, in one-letter code: MutS protein homolog 4 (878 aa).

The segment at 22–41 is disordered; it reads NSSNSISKPSTKKSIRNQKS. 634-641 is a binding site for ATP; the sequence is GCNMSGKS.

Belongs to the DNA mismatch repair MutS family. As to quaternary structure, heterooligomer of MSH4 and MSH5.

In terms of biological role, involved in meiotic recombination. Facilitate crossovers between homologs during meiosis. This is MutS protein homolog 4 (MSH4) from Saccharomyces cerevisiae (strain ATCC 204508 / S288c) (Baker's yeast).